Reading from the N-terminus, the 95-residue chain is Aspartyl/glutamyl-tRNA(Asn/Gln) amidotransferase subunit C (95 aa).

This sequence belongs to the GatC family. As to quaternary structure, heterotrimer of A, B and C subunits.

The catalysed reaction is L-glutamyl-tRNA(Gln) + L-glutamine + ATP + H2O = L-glutaminyl-tRNA(Gln) + L-glutamate + ADP + phosphate + H(+). It carries out the reaction L-aspartyl-tRNA(Asn) + L-glutamine + ATP + H2O = L-asparaginyl-tRNA(Asn) + L-glutamate + ADP + phosphate + 2 H(+). Its function is as follows. Allows the formation of correctly charged Asn-tRNA(Asn) or Gln-tRNA(Gln) through the transamidation of misacylated Asp-tRNA(Asn) or Glu-tRNA(Gln) in organisms which lack either or both of asparaginyl-tRNA or glutaminyl-tRNA synthetases. The reaction takes place in the presence of glutamine and ATP through an activated phospho-Asp-tRNA(Asn) or phospho-Glu-tRNA(Gln). The chain is Aspartyl/glutamyl-tRNA(Asn/Gln) amidotransferase subunit C from Cytophaga hutchinsonii (strain ATCC 33406 / DSM 1761 / CIP 103989 / NBRC 15051 / NCIMB 9469 / D465).